A 185-amino-acid chain; its full sequence is Orotate phosphoribosyltransferase (185 aa).

5-phospho-alpha-D-ribose 1-diphosphate-binding positions include arginine 98, lysine 99, lysine 102, histidine 104, and 128-136; that span reads EDVTTTGGS. Threonine 132 and arginine 160 together coordinate orotate.

Belongs to the purine/pyrimidine phosphoribosyltransferase family. PyrE subfamily. Homodimer. The cofactor is Mg(2+).

It catalyses the reaction orotidine 5'-phosphate + diphosphate = orotate + 5-phospho-alpha-D-ribose 1-diphosphate. It participates in pyrimidine metabolism; UMP biosynthesis via de novo pathway; UMP from orotate: step 1/2. Its function is as follows. Catalyzes the transfer of a ribosyl phosphate group from 5-phosphoribose 1-diphosphate to orotate, leading to the formation of orotidine monophosphate (OMP). The polypeptide is Orotate phosphoribosyltransferase (Bradyrhizobium sp. (strain ORS 278)).